The following is an 899-amino-acid chain: Conserved oligomeric Golgi complex subunit 3 (899 aa).

It belongs to the COG3 family. As to quaternary structure, component of the conserved oligomeric Golgi complex which is composed of eight different subunits and is required for normal Golgi morphology and localization.

It is found in the golgi apparatus membrane. Its function is as follows. Involved in ER-Golgi transport. The polypeptide is Conserved oligomeric Golgi complex subunit 3 (Aedes aegypti (Yellowfever mosquito)).